The primary structure comprises 231 residues: Adenosylcobinamide-GDP ribazoletransferase (231 aa).

A run of 6 helical transmembrane segments spans residues 24 to 44 (LWAFPLVALVSSALPTLILYL), 46 to 66 (LPLSNLLAVLALYWTIGLLHL), 96 to 116 (IAGLFAVVIVLLLQVYSLQLL), 159 to 176 (LALGTLLYVLLGLSVVLF), 181 to 198 (LAGILGLLFGVHIIRISL), and 209 to 229 (LGATAEITRAGTLVVMALVWW).

It belongs to the CobS family. Requires Mg(2+) as cofactor.

The protein resides in the cell membrane. It carries out the reaction alpha-ribazole + adenosylcob(III)inamide-GDP = adenosylcob(III)alamin + GMP + H(+). It catalyses the reaction alpha-ribazole 5'-phosphate + adenosylcob(III)inamide-GDP = adenosylcob(III)alamin 5'-phosphate + GMP + H(+). Its pathway is cofactor biosynthesis; adenosylcobalamin biosynthesis; adenosylcobalamin from cob(II)yrinate a,c-diamide: step 7/7. In terms of biological role, joins adenosylcobinamide-GDP and alpha-ribazole to generate adenosylcobalamin (Ado-cobalamin). Also synthesizes adenosylcobalamin 5'-phosphate from adenosylcobinamide-GDP and alpha-ribazole 5'-phosphate. This is Adenosylcobinamide-GDP ribazoletransferase from Thermococcus kodakarensis (strain ATCC BAA-918 / JCM 12380 / KOD1) (Pyrococcus kodakaraensis (strain KOD1)).